A 175-amino-acid polypeptide reads, in one-letter code: Adenine phosphoribosyltransferase (175 aa).

The protein belongs to the purine/pyrimidine phosphoribosyltransferase family. In terms of assembly, homodimer.

Its subcellular location is the cytoplasm. The catalysed reaction is AMP + diphosphate = 5-phospho-alpha-D-ribose 1-diphosphate + adenine. It functions in the pathway purine metabolism; AMP biosynthesis via salvage pathway; AMP from adenine: step 1/1. Its function is as follows. Catalyzes a salvage reaction resulting in the formation of AMP, that is energically less costly than de novo synthesis. In Nitrosospira multiformis (strain ATCC 25196 / NCIMB 11849 / C 71), this protein is Adenine phosphoribosyltransferase.